The primary structure comprises 231 residues: L-ribulose-5-phosphate 4-epimerase AraD (231 aa).

Residues 27-28, 44-45, and 74-75 each bind substrate; these read GN, SG, and SS. Positions 76, 95, and 97 each coordinate Zn(2+). Asp120 acts as the Proton donor/acceptor in catalysis. Zn(2+) is bound at residue His171. Tyr229 acts as the Proton donor/acceptor in catalysis.

This sequence belongs to the aldolase class II family. AraD/FucA subfamily. Homotetramer. Zn(2+) serves as cofactor.

It carries out the reaction L-ribulose 5-phosphate = D-xylulose 5-phosphate. The protein operates within carbohydrate degradation; L-arabinose degradation via L-ribulose; D-xylulose 5-phosphate from L-arabinose (bacterial route): step 3/3. Inhibited by glycolohydroxamate at concentration above 0.1 mM. In terms of biological role, involved in the degradation of L-arabinose. Catalyzes the interconversion of L-ribulose 5-phosphate (LRu5P) and D-xylulose 5-phosphate (D-Xu5P) via a retroaldol/aldol mechanism (carbon-carbon bond cleavage analogous to a class II aldolase reaction). This chain is L-ribulose-5-phosphate 4-epimerase AraD, found in Escherichia coli (strain K12).